The sequence spans 184 residues: Large ribosomal subunit protein uL6 (184 aa).

This sequence belongs to the universal ribosomal protein uL6 family. Part of the 50S ribosomal subunit.

Functionally, this protein binds to the 23S rRNA, and is important in its secondary structure. It is located near the subunit interface in the base of the L7/L12 stalk, and near the tRNA binding site of the peptidyltransferase center. This chain is Large ribosomal subunit protein uL6, found in Thermomicrobium roseum (strain ATCC 27502 / DSM 5159 / P-2).